The primary structure comprises 102 residues: N(4)-acetylcytidine amidohydrolase (102 aa).

Positions 6 to 93 (TFFSRFEQDI…IKEIYPGLDE (88 aa)) constitute an ASCH domain. Catalysis depends on Lys-20, which acts as the Proton acceptor. The active-site Nucleophile is Thr-23. Glu-73 serves as the catalytic Proton donor.

The protein belongs to the N(4)-acetylcytidine amidohydrolase family.

The enzyme catalyses N(4)-acetylcytidine + H2O = cytidine + acetate + H(+). The catalysed reaction is N(4)-acetyl-2'-deoxycytidine + H2O = 2'-deoxycytidine + acetate + H(+). It catalyses the reaction N(4)-acetylcytosine + H2O = cytosine + acetate + H(+). Catalyzes the hydrolysis of N(4)-acetylcytidine (ac4C). The polypeptide is N(4)-acetylcytidine amidohydrolase (Serratia proteamaculans (strain 568)).